Reading from the N-terminus, the 481-residue chain is Glutamate mutase epsilon subunit (481 aa).

Residue Arg-67 participates in L-glutamate binding. Gly-69 contributes to the adenosylcob(III)alamin binding site. Arg-99 contributes to the L-glutamate binding site. Asn-122 lines the adenosylcob(III)alamin pocket. Residues 148–149 (RH), Glu-170, and Tyr-176 contribute to the L-glutamate site. Pro-179 serves as a coordination point for adenosylcob(III)alamin. L-glutamate is bound at residue Tyr-180. Residues Phe-296, Lys-325, Glu-329, and Ile-333 each contribute to the adenosylcob(III)alamin site.

Belongs to the methylaspartate mutase GlmE subunit family. Heterotetramer composed of 2 epsilon subunits (GlmE) and 2 sigma subunits (GlmS). GlmE exists as a homodimer and GlmS as a monomer. It depends on adenosylcob(III)alamin as a cofactor.

The enzyme catalyses (2S,3S)-3-methyl-L-aspartate = L-glutamate. Its pathway is amino-acid degradation; L-glutamate degradation via mesaconate pathway; acetate and pyruvate from L-glutamate: step 1/4. Its function is as follows. Catalyzes the carbon skeleton rearrangement of L-glutamate to L-threo-3-methylaspartate ((2S,3S)-3-methylaspartate). This is Glutamate mutase epsilon subunit from Yersinia enterocolitica serotype O:8 / biotype 1B (strain NCTC 13174 / 8081).